We begin with the raw amino-acid sequence, 108 residues long: uncharacterized protein (108 aa).

The segment at 81–108 is disordered; the sequence is TNHHQQQQNHQNQQQQQQQPNGIFENNI. Low complexity predominate over residues 83–99; it reads HHQQQQNHQNQQQQQQQ.

This is an uncharacterized protein from Dictyostelium discoideum (Social amoeba).